The sequence spans 468 residues: Ribulose bisphosphate carboxylase large chain (468 aa).

Lys5 carries the post-translational modification N6,N6,N6-trimethyllysine. Substrate is bound by residues Asn114 and Thr164. Lys166 functions as the Proton acceptor in the catalytic mechanism. Lys168 serves as a coordination point for substrate. Mg(2+) is bound by residues Lys192, Asp194, and Glu195. Position 192 is an N6-carboxylysine (Lys192). Residue His285 is the Proton acceptor of the active site. Positions 286, 318, and 370 each coordinate substrate.

It belongs to the RuBisCO large chain family. Type I subfamily. As to quaternary structure, heterohexadecamer of 8 large chains and 8 small chains; disulfide-linked. The disulfide link is formed within the large subunit homodimers. Mg(2+) is required as a cofactor. The disulfide bond which can form in the large chain dimeric partners within the hexadecamer appears to be associated with oxidative stress and protein turnover.

The protein localises to the plastid. The protein resides in the chloroplast. It carries out the reaction 2 (2R)-3-phosphoglycerate + 2 H(+) = D-ribulose 1,5-bisphosphate + CO2 + H2O. The catalysed reaction is D-ribulose 1,5-bisphosphate + O2 = 2-phosphoglycolate + (2R)-3-phosphoglycerate + 2 H(+). In terms of biological role, ruBisCO catalyzes two reactions: the carboxylation of D-ribulose 1,5-bisphosphate, the primary event in carbon dioxide fixation, as well as the oxidative fragmentation of the pentose substrate in the photorespiration process. Both reactions occur simultaneously and in competition at the same active site. This Catesbaea spinosa protein is Ribulose bisphosphate carboxylase large chain.